The following is a 198-amino-acid chain: MEKPAGRKKKTPTPREEADVQKSALREEKVSGDRKPPERPTVPRKPRTEPCLSPEDEEHVFDAFDASFKDDFEGVPVFIPFQRKKPYECSECGRIFKHKTDHIRHQRVHTGEKPFKCAQCGKAFRHSSDVTKHQRTHTGEKPFKCGECGKAFNCGSNLLKHQKTHTGEKPYECTHCGKAFAYSSCLIRHQKRHPRKKP.

Residues 1–12 (MEKPAGRKKKTP) are compositionally biased toward basic residues. Residues 1–55 (MEKPAGRKKKTPTPREEADVQKSALREEKVSGDRKPPERPTVPRKPRTEPCLSPE) form a disordered region. Basic and acidic residues predominate over residues 13–38 (TPREEADVQKSALREEKVSGDRKPPE). 4 consecutive C2H2-type zinc fingers follow at residues 87-109 (YECSECGRIFKHKTDHIRHQRVH), 115-137 (FKCAQCGKAFRHSSDVTKHQRTH), 143-165 (FKCGECGKAFNCGSNLLKHQKTH), and 171-193 (YECTHCGKAFAYSSCLIRHQKRH).

It belongs to the krueppel C2H2-type zinc-finger protein family.

It localises to the nucleus. Functionally, a putative DNA-binding regulatory protein associated with meiosis in spermatogenesis. The protein is Zinc finger protein 41 homolog (ZFP41) of Homo sapiens (Human).